Reading from the N-terminus, the 90-residue chain is Evasin P458 (90 aa).

Positions 1–24 (MEVKTFAFLQIAVLIAFSLHSASA) are cleaved as a signal peptide. Cystine bridges form between Cys-44/Cys-63, Cys-48/Cys-65, and Cys-59/Cys-76. N-linked (GlcNAc...) asparagine glycosylation occurs at Asn-47.

The protein localises to the secreted. Functionally, salivary chemokine-binding protein which binds to host chemokines CXCL1, CXCL2, CXCL3, CXCL5, CXCL6 and CXCL13. The protein is Evasin P458 of Ixodes ricinus (Common tick).